The primary structure comprises 134 residues: Photosystem II lipoprotein Psb27 (134 aa).

Positions methionine 1–alanine 24 are cleaved as a signal peptide. A lipid anchor (N-palmitoyl cysteine) is attached at cysteine 25. A lipid anchor (S-diacylglycerol cysteine) is attached at cysteine 25.

This sequence belongs to the Psb27 family. Monomer. Forms a complex with a monomeric, partially assembled PSII. This is probably the complex in which D1 is assembled and/or replaced. Present in 6-10% of PSII complexes; mostly in monomeric PSII. These PSII do not evolve oxygen, do not have an assembled calcium-manganese-oxide cluster. Psb27-containing PSII seem to be assembly intermediates; a wild-type strain includes the intrinsic membrane proteins, Psb27, Pbs28, substoichiometric amounts of PsbO and PsbQ but no PsbU or PsbV, while a ctpA deletion mutant includes the intrinsic membrane proteins (D1 as precursor), Psb27, a very low amount of PsbO and PsbQ, but no PsbU or PsbV. Small amounts of Psb27 interact with the lumenal domain of CP43 (psbC) in wild-type and a ctpA mutant. A small amount can also be detected in monomeric and trimeric photosystem I (PSI), possibly via association with PsaB.

The protein localises to the cellular thylakoid membrane. In terms of biological role, plays a role in the repair and/or biogenesis of the calcium-manganese-oxide cluster on the lumenal face of the thylakoid membrane. Photosystem II (PSII) complexes containing this protein are monomeric, are assembly intermediates lacking the calcium-manganese-oxide cluster and miss some of the lumenal subunits. Probably blocks binding of some of the small lumenal subunits. The protein is Photosystem II lipoprotein Psb27 of Synechocystis sp. (strain ATCC 27184 / PCC 6803 / Kazusa).